The following is a 209-amino-acid chain: Small ribosomal subunit protein uS4 (209 aa).

The 66-residue stretch at 99-164 (GRLDSVVYRM…QLRVKAALEA (66 aa)) folds into the S4 RNA-binding domain.

Belongs to the universal ribosomal protein uS4 family. As to quaternary structure, part of the 30S ribosomal subunit. Contacts protein S5. The interaction surface between S4 and S5 is involved in control of translational fidelity.

In terms of biological role, one of the primary rRNA binding proteins, it binds directly to 16S rRNA where it nucleates assembly of the body of the 30S subunit. Its function is as follows. With S5 and S12 plays an important role in translational accuracy. This Aromatoleum aromaticum (strain DSM 19018 / LMG 30748 / EbN1) (Azoarcus sp. (strain EbN1)) protein is Small ribosomal subunit protein uS4.